We begin with the raw amino-acid sequence, 268 residues long: MRRIDSCFAELRANGRKALIPFITAGDPSLEATVPVMHALVRAGADVIELGVPFSDPMADGPTIQRSSERALGRGAGLAYVLEAVHEFRREDATTPVVLMGYLNPIEIHGTRRFAEAAVAAGVDGVLLVDLPPEEAGETRAIFTEVGLALIALASPTTSEQRLDMLCSTAQGYLYYVSFAGVTGASNLLDTHAASDRLRQLRQRAGAPVVAGFGIKDAASAAAMAVDADGVVVGSALVAALADAGEVRSARERAEAFLAPLRQALDQK.

Active-site proton acceptor residues include Glu-49 and Asp-60.

It belongs to the TrpA family. In terms of assembly, tetramer of two alpha and two beta chains.

The enzyme catalyses (1S,2R)-1-C-(indol-3-yl)glycerol 3-phosphate + L-serine = D-glyceraldehyde 3-phosphate + L-tryptophan + H2O. It participates in amino-acid biosynthesis; L-tryptophan biosynthesis; L-tryptophan from chorismate: step 5/5. The alpha subunit is responsible for the aldol cleavage of indoleglycerol phosphate to indole and glyceraldehyde 3-phosphate. The protein is Tryptophan synthase alpha chain of Xanthomonas euvesicatoria pv. vesicatoria (strain 85-10) (Xanthomonas campestris pv. vesicatoria).